Consider the following 361-residue polypeptide: D-alanine--D-alanine ligase (361 aa).

An ATP-grasp domain is found at 134–344 (KLLLKSFDIP…FKDLVDNLID (211 aa)). An ATP-binding site is contributed by 167–222 (KEVLGYPVIVKPAVLGSSIGINVAYSENQIESFIKEALKYDLTIVIEKFIEAREIE). Residues Asp-297, Glu-311, and Asn-313 each contribute to the Mg(2+) site.

It belongs to the D-alanine--D-alanine ligase family. The cofactor is Mg(2+). Mn(2+) serves as cofactor.

The protein resides in the cytoplasm. It catalyses the reaction 2 D-alanine + ATP = D-alanyl-D-alanine + ADP + phosphate + H(+). The protein operates within cell wall biogenesis; peptidoglycan biosynthesis. Its function is as follows. Cell wall formation. This Borreliella burgdorferi (strain ZS7) (Borrelia burgdorferi) protein is D-alanine--D-alanine ligase.